A 1406-amino-acid polypeptide reads, in one-letter code: DNA-directed RNA polymerase subunit beta' (1406 aa).

4 residues coordinate Zn(2+): Cys70, Cys72, Cys85, and Cys88. 3 residues coordinate Mg(2+): Asp460, Asp462, and Asp464. 4 residues coordinate Zn(2+): Cys814, Cys888, Cys895, and Cys898.

Belongs to the RNA polymerase beta' chain family. As to quaternary structure, the RNAP catalytic core consists of 2 alpha, 1 beta, 1 beta' and 1 omega subunit. When a sigma factor is associated with the core the holoenzyme is formed, which can initiate transcription. The cofactor is Mg(2+). Zn(2+) serves as cofactor.

The enzyme catalyses RNA(n) + a ribonucleoside 5'-triphosphate = RNA(n+1) + diphosphate. Its function is as follows. DNA-dependent RNA polymerase catalyzes the transcription of DNA into RNA using the four ribonucleoside triphosphates as substrates. The sequence is that of DNA-directed RNA polymerase subunit beta' from Yersinia enterocolitica serotype O:8 / biotype 1B (strain NCTC 13174 / 8081).